The sequence spans 819 residues: Nuclear pore complex protein Nup93 (819 aa).

Residue threonine 49 is modified to Phosphothreonine. 7 positions are modified to phosphoserine: serine 52, serine 66, serine 72, serine 75, serine 80, serine 430, and serine 767.

Belongs to the nucleoporin interacting component (NIC) family. In terms of assembly, part of the nuclear pore complex (NPC). Component of the p62 complex, a complex composed of NUP62 and NUP54. Forms a complex with NUP35, NUP155, NUP205 and lamin B; the interaction with NUP35 is direct. Does not interact with TPR. Interacts with SMAD4 and IPO7; translocates SMAD4 to the nucleus through the NPC upon BMP7 stimulation resulting in activation of SMAD4 signaling.

The protein resides in the nucleus membrane. Its subcellular location is the nucleus. It is found in the nuclear pore complex. The protein localises to the nucleus envelope. Functionally, plays a role in the nuclear pore complex (NPC) assembly and/or maintenance. May anchor nucleoporins, but not NUP153 and TPR, to the NPC. During renal development, regulates podocyte migration and proliferation through SMAD4 signaling. This Rattus norvegicus (Rat) protein is Nuclear pore complex protein Nup93 (Nup93).